The following is a 275-amino-acid chain: tRNA pseudouridine synthase A (275 aa).

The Nucleophile role is filled by Asp-56. Tyr-114 provides a ligand contact to substrate.

The protein belongs to the tRNA pseudouridine synthase TruA family. In terms of assembly, homodimer.

It carries out the reaction uridine(38/39/40) in tRNA = pseudouridine(38/39/40) in tRNA. Functionally, formation of pseudouridine at positions 38, 39 and 40 in the anticodon stem and loop of transfer RNAs. This Polynucleobacter asymbioticus (strain DSM 18221 / CIP 109841 / QLW-P1DMWA-1) (Polynucleobacter necessarius subsp. asymbioticus) protein is tRNA pseudouridine synthase A.